The primary structure comprises 352 residues: Phosphoribosylformylglycinamidine cyclo-ligase (352 aa).

Belongs to the AIR synthase family.

Its subcellular location is the cytoplasm. It catalyses the reaction 2-formamido-N(1)-(5-O-phospho-beta-D-ribosyl)acetamidine + ATP = 5-amino-1-(5-phospho-beta-D-ribosyl)imidazole + ADP + phosphate + H(+). Its pathway is purine metabolism; IMP biosynthesis via de novo pathway; 5-amino-1-(5-phospho-D-ribosyl)imidazole from N(2)-formyl-N(1)-(5-phospho-D-ribosyl)glycinamide: step 2/2. The polypeptide is Phosphoribosylformylglycinamidine cyclo-ligase (Pseudomonas syringae pv. tomato (strain ATCC BAA-871 / DC3000)).